We begin with the raw amino-acid sequence, 529 residues long: Listeriolysin O (529 aa).

The signal sequence occupies residues 1 to 24 (MKKIMLVFITLILISLPIAQQTEA). The tract at residues 35–54 (SISSMAPPASPPASPKTPIE) is disordered. 4 beta stranded membrane passes run 214–227 (ESQL…AFKA), 234–243 (VNFGAISEGK), 312–321 (STKVKAAFDA), and 329–341 (SGDV…IKNS). Residues 483-493 (ECTGLAWEWWR) carry the Conserved undecapeptide motif. The Cholesterol binding signature appears at 515–516 (TL).

It belongs to the cholesterol-dependent cytolysin family. Homooligomeric pore complex of 35 to 50 subunits; when inserted in the host membrane.

The protein resides in the secreted. It is found in the host membrane. It localises to the host cell membrane. With respect to regulation, activity of listeriolysin O is regulated on multiple levels. It should be high in the phagosome, thereby allowing escape of the bacteria from the phagosomal compartment. Then, once inside the host cytosol, the activity must be controlled to prevent lysis of the host plasma membrane and loss of the intracellular environment. A cholesterol-dependent toxin that causes cytolysis by forming pores in cholesterol containing host membranes. After binding to target membranes, the protein undergoes a major conformation change, leading to its insertion in the host membrane and formation of an oligomeric pore complex. Cholesterol is required for binding to host membranes, membrane insertion and pore formation; cholesterol binding is mediated by a Thr-Leu pair in the C-terminus. Acts as a major virulence factor required for the escape of bacteria from phagosomal vacuoles and entry into the host cytosol. Can be reversibly inactivated by oxidation. The protein is Listeriolysin O (hly) of Listeria monocytogenes serotype 4a (strain HCC23).